The chain runs to 230 residues: Cytidylate kinase (230 aa).

An ATP-binding site is contributed by 12 to 20; that stretch reads GPSGAGKGT.

It belongs to the cytidylate kinase family. Type 1 subfamily.

Its subcellular location is the cytoplasm. It carries out the reaction CMP + ATP = CDP + ADP. It catalyses the reaction dCMP + ATP = dCDP + ADP. The chain is Cytidylate kinase from Shewanella putrefaciens (strain CN-32 / ATCC BAA-453).